A 1135-amino-acid chain; its full sequence is Retinoblastoma-like protein 2 (1135 aa).

Residues 1–43 are disordered; the sequence is MASGGNQSSPPPPAAAASSEEEEEDGDTADRAQPAGSPSHQIQ. Ser410 bears the Phosphoserine mark. At Thr414 the chain carries Phosphothreonine. The domain A stretch occupies residues 414 to 613; it reads TPVSTATHSL…DRIRDNENRV (200 aa). The pocket; binds E1A stretch occupies residues 414–1021; sequence TPVSTATHSL…QTFAMKYSQA (608 aa). Residue Ser417 is glycosylated (O-linked (GlcNAc) serine). The interval 614–824 is spacer; that stretch reads PTCEEVTPPH…QGQPLTSSSI (211 aa). Ser636 is modified (phosphoserine). Position 639 is a phosphothreonine (Thr639). Disordered stretches follow at residues 649-698, 806-825, and 932-995; these read DAGG…PPQP, ISPG…SSIR, and RRNS…EEEE. Residues 656–674 show a composition bias toward polar residues; it reads SVTSPTTLYDRYSSPTVST. 3 positions are modified to phosphoserine: Ser659, Ser669, and Ser684. Over residues 806–818 the composition is skewed to low complexity; sequence ISPGGQQQNQGQP. A domain B region spans residues 825–1021; that stretch reads RPRKTSSLSL…QTFAMKYSQA (197 aa). 2 stretches are compositionally biased toward polar residues: residues 935–950 and 958–969; these read SGSC…PTEL and DSSPVMRSNSTL. 5 positions are modified to phosphoserine: Ser942, Ser946, Ser960, Ser965, and Ser967. Thr968 carries the post-translational modification Phosphothreonine. Over residues 971–981 the composition is skewed to pro residues; that stretch reads VPQPSSAPPTP. Phosphoserine is present on residues Ser975 and Ser976. The residue at position 980 (Thr980) is a Phosphothreonine. Phosphoserine is present on residues Ser1031, Ser1064, Ser1076, and Ser1108.

It belongs to the retinoblastoma protein (RB) family. As to quaternary structure, interacts with AATF, KMT5B and KMT5C. Component of the DREAM complex (also named LINC complex) at least composed of E2F4, E2F5, LIN9, LIN37, LIN52, LIN54, MYBL1, MYBL2, RBL1, RBL2, RBBP4, TFDP1 and TFDP2. The complex exists in quiescent cells where it represses cell cycle-dependent genes. It dissociates in S phase when LIN9, LIN37, LIN52 and LIN54 form a subcomplex that binds to MYBL2. Interacts with USP4. Part of the peroxisome proliferator activated receptor alpha (PPAR-alpha) interacting complex (PRIC). Interacts with RINT1. Interacts with PML. Interacts with RBBP9. Interacts with CD53. Post-translationally, during G0 and early G1 phase of the cell cycle, phosphorylated on Ser-636 and on 5 sites within the domain B. Phosphorylation on Ser-669 in G1 leads to its ubiquitin-dependent proteolysis.

The protein localises to the nucleus. Functionally, key regulator of entry into cell division. Directly involved in heterochromatin formation by maintaining overall chromatin structure and, in particular, that of constitutive heterochromatin by stabilizing histone methylation. Recruits and targets histone methyltransferases KMT5B and KMT5C, leading to epigenetic transcriptional repression. Controls histone H4 'Lys-20' trimethylation. Probably acts as a transcription repressor by recruiting chromatin-modifying enzymes to promoters. Potent inhibitor of E2F-mediated trans-activation, associates preferentially with E2F5. Binds to cyclins A and E. Binds to and may be involved in the transforming capacity of the adenovirus E1A protein. May act as a tumor suppressor. The chain is Retinoblastoma-like protein 2 (Rbl2) from Rattus norvegicus (Rat).